The chain runs to 239 residues: 1-(5-phosphoribosyl)-5-[(5-phosphoribosylamino)methylideneamino] imidazole-4-carboxamide isomerase (239 aa).

The active-site Proton acceptor is D8. D129 acts as the Proton donor in catalysis.

Belongs to the HisA/HisF family.

It localises to the cytoplasm. The enzyme catalyses 1-(5-phospho-beta-D-ribosyl)-5-[(5-phospho-beta-D-ribosylamino)methylideneamino]imidazole-4-carboxamide = 5-[(5-phospho-1-deoxy-D-ribulos-1-ylimino)methylamino]-1-(5-phospho-beta-D-ribosyl)imidazole-4-carboxamide. It functions in the pathway amino-acid biosynthesis; L-histidine biosynthesis; L-histidine from 5-phospho-alpha-D-ribose 1-diphosphate: step 4/9. This is 1-(5-phosphoribosyl)-5-[(5-phosphoribosylamino)methylideneamino] imidazole-4-carboxamide isomerase from Bacillus cereus (strain ATCC 10987 / NRS 248).